The primary structure comprises 172 residues: Zinc finger protein 580 (172 aa).

A disordered region spans residues M1–S93. Positions M19–P30 are enriched in pro residues. K31 is covalently cross-linked (Glycyl lysine isopeptide (Lys-Gly) (interchain with G-Cter in SUMO2)). Residues K31–G44 show a composition bias toward low complexity. A compositionally biased stretch (pro residues) spans G75–P86. The C2H2-type 1 zinc-finger motif lies at Y92–H114. A Glycyl lysine isopeptide (Lys-Gly) (interchain with G-Cter in SUMO2) cross-link involves residue K118. C2H2-type zinc fingers lie at residues F120 to H142 and H150 to H172.

As to quaternary structure, interacts with SMAD2. In terms of tissue distribution, expressed in endothelial cells.

It is found in the nucleus. Involved in the regulation of endothelial cell proliferation and migration. Mediates H(2)O(2)-induced leukocyte chemotaxis by elevating interleukin-8 production and may play a role in inflammation. May be involved in transcriptional regulation. In Homo sapiens (Human), this protein is Zinc finger protein 580 (ZNF580).